We begin with the raw amino-acid sequence, 353 residues long: Quinolinate synthase (353 aa).

Iminosuccinate contacts are provided by His-47 and Ser-68. A [4Fe-4S] cluster-binding site is contributed by Cys-113. Iminosuccinate-binding positions include 139-141 (YAN) and Ser-156. Cys-200 provides a ligand contact to [4Fe-4S] cluster. Iminosuccinate contacts are provided by residues 226–228 (HPE) and Thr-243. Cys-297 provides a ligand contact to [4Fe-4S] cluster.

It belongs to the quinolinate synthase family. Type 1 subfamily. The cofactor is [4Fe-4S] cluster.

The protein resides in the cytoplasm. It catalyses the reaction iminosuccinate + dihydroxyacetone phosphate = quinolinate + phosphate + 2 H2O + H(+). The protein operates within cofactor biosynthesis; NAD(+) biosynthesis; quinolinate from iminoaspartate: step 1/1. In terms of biological role, catalyzes the condensation of iminoaspartate with dihydroxyacetone phosphate to form quinolinate. The chain is Quinolinate synthase from Yersinia pseudotuberculosis serotype O:3 (strain YPIII).